A 92-amino-acid chain; its full sequence is Putative defensin-like protein 251 (92 aa).

The signal sequence occupies residues 1 to 27 (MRCVTSFVVFCILMFFVLNIFTVEVKA). Intrachain disulfides connect Cys-34–Cys-90, Cys-45–Cys-69, Cys-53–Cys-82, and Cys-67–Cys-84.

It belongs to the DEFL family.

The protein localises to the secreted. This Arabidopsis thaliana (Mouse-ear cress) protein is Putative defensin-like protein 251 (SCRL12).